The sequence spans 229 residues: tRNA (guanine-N(7)-)-methyltransferase (229 aa).

Glu-62, Glu-87, Asp-114, and Asp-137 together coordinate S-adenosyl-L-methionine. Asp-137 is an active-site residue. Lys-141 lines the substrate pocket. Residues 143–148 form an interaction with RNA region; that stretch reads KHNKRR. Residues Asp-173 and 208 to 211 contribute to the substrate site; that span reads TKFE.

It belongs to the class I-like SAM-binding methyltransferase superfamily. TrmB family.

The enzyme catalyses guanosine(46) in tRNA + S-adenosyl-L-methionine = N(7)-methylguanosine(46) in tRNA + S-adenosyl-L-homocysteine. Its pathway is tRNA modification; N(7)-methylguanine-tRNA biosynthesis. In terms of biological role, catalyzes the formation of N(7)-methylguanine at position 46 (m7G46) in tRNA. This Francisella philomiragia subsp. philomiragia (strain ATCC 25017 / CCUG 19701 / FSC 153 / O#319-036) protein is tRNA (guanine-N(7)-)-methyltransferase.